The sequence spans 255 residues: Sec-independent protein translocase protein TatC (255 aa).

A run of 7 helical transmembrane segments spans residues 28-48 (VAAVLLIFAALFYFAQDIYAL), 56-76 (YLPEGATMIATGVASPFLAPF), 80-100 (LMISLFLAMPVVLHQVWGFIA), 121-141 (LFYAGMAFAYFVVFPIMFGFF), 165-185 (LFFAFGVAFEVPVATFLLIWV), 195-212 (NSRPYVIVGCFVVGMVLT), and 216-236 (VFSQTLLAVPMWLLFEIGVFF).

This sequence belongs to the TatC family. As to quaternary structure, the Tat system comprises two distinct complexes: a TatABC complex, containing multiple copies of TatA, TatB and TatC subunits, and a separate TatA complex, containing only TatA subunits. Substrates initially bind to the TatABC complex, which probably triggers association of the separate TatA complex to form the active translocon.

It localises to the cell membrane. Its function is as follows. Part of the twin-arginine translocation (Tat) system that transports large folded proteins containing a characteristic twin-arginine motif in their signal peptide across membranes. Together with TatB, TatC is part of a receptor directly interacting with Tat signal peptides. The chain is Sec-independent protein translocase protein TatC from Azotobacter chroococcum mcd 1.